The sequence spans 386 residues: DNA-directed RNA polymerase subunit Rpo1C (386 aa).

It belongs to the RNA polymerase beta' chain family. As to quaternary structure, part of the RNA polymerase complex.

Its subcellular location is the cytoplasm. It catalyses the reaction RNA(n) + a ribonucleoside 5'-triphosphate = RNA(n+1) + diphosphate. Functionally, DNA-dependent RNA polymerase (RNAP) catalyzes the transcription of DNA into RNA using the four ribonucleoside triphosphates as substrates. Forms part of the jaw domain. In Methanococcus maripaludis (strain C6 / ATCC BAA-1332), this protein is DNA-directed RNA polymerase subunit Rpo1C.